Consider the following 641-residue polypeptide: 1,3-beta-glucanosyltransferase PGA5 (641 aa).

The signal sequence occupies residues 1 to 23; sequence MTTLSTIWLFLITITAIFQLGLS. N-linked (GlcNAc...) asparagine glycosylation is present at asparagine 25. A disulfide bridge connects residues cysteine 106 and cysteine 135. Residues tyrosine 124, asparagine 192, glutamate 193, aspartate 234, and arginine 239 each coordinate (1,3-beta-D-glucosyl)n. Glutamate 193 serves as the catalytic Proton donor. 6 cysteine pairs are disulfide-bonded: cysteine 248–cysteine 390, cysteine 276–cysteine 307, cysteine 424–cysteine 474, cysteine 426–cysteine 528, cysteine 433–cysteine 498, and cysteine 451–cysteine 456. Glutamate 304 serves as the catalytic Nucleophile. (1,3-beta-D-glucosyl)n is bound at residue tyrosine 336. A disordered region spans residues 535-613; sequence KEEEKEVQEE…SPKTSKSIAG (79 aa). A compositionally biased stretch (basic and acidic residues) spans 571–581; sequence KSKEKEKGKLI. Residues 582–593 are compositionally biased toward acidic residues; that stretch reads EEEEEEEEEEEE. Polar residues predominate over residues 596-610; it reads KTPSSGEKSPKTSKS. N-linked (GlcNAc...) asparagine glycosylation occurs at asparagine 621. The GPI-anchor amidated aspartate moiety is linked to residue aspartate 622. Positions 623 to 641 are cleaved as a propeptide — removed in mature form; sequence SIWKTFIEILFTCSAAILI.

It belongs to the glycosyl hydrolase 72 family.

It is found in the cell membrane. Its function is as follows. Splits internally a 1,3-beta-glucan molecule and transfers the newly generated reducing end (the donor) to the non-reducing end of another 1,3-beta-glucan molecule (the acceptor) forming a 1,3-beta linkage, resulting in the elongation of 1,3-beta-glucan chains in the cell wall. Involved in spore wall assembly. This Candida albicans (strain SC5314 / ATCC MYA-2876) (Yeast) protein is 1,3-beta-glucanosyltransferase PGA5 (PGA5).